Consider the following 429-residue polypeptide: MREINSLVVVGSQWGDEGKGKMTDYFAQKADVVVRFAGGDNAGHVINFNGQKHKVTIIPSGIFNSEVTSVIGNGCAVNLINLVKELETIKNSGVKLGKLLISDRAQLILPYHILIDGAQEESRGARKIGTTKRGIGPTYQDKAARLGIRVADIEEEDFKETFKEIFEYQMMFLDRMFNVESIDFEETYANLINAYNVIKDCVTDTGIFVEQAIKNGKKVLFEGAQGALLDIDHGTYPYVTSSNTSANNASTGTGISHKLINNTLGVVKAYSTRVGAGAFPTELLNEVGDGIRERGHEYGSNTKRPRRVGWLDLVALKHAIRTSGIDYLFITLLDVLSGVEELLICDKYILNGEEINYIPATSSKHEKCKANYISMPGWKEDITKVKHFEELPLNAKNYLNKIAEICEVEISGFSVGPDRLQTVITKEIM.

GTP is bound by residues 15–21 and 43–45; these read GDEGKGK and GHV. The active-site Proton acceptor is Asp-16. 2 residues coordinate Mg(2+): Asp-16 and Gly-43. IMP contacts are provided by residues 16–19, 41–44, Thr-131, Arg-145, Gln-225, Thr-240, and Arg-304; these read DEGK and NAGH. The Proton donor role is filled by His-44. Residue 300–306 participates in substrate binding; sequence SNTKRPR. GTP contacts are provided by residues Arg-306, 332–334, and 414–416; these read LLD and SVG.

This sequence belongs to the adenylosuccinate synthetase family. As to quaternary structure, homodimer. Mg(2+) serves as cofactor.

It localises to the cytoplasm. The catalysed reaction is IMP + L-aspartate + GTP = N(6)-(1,2-dicarboxyethyl)-AMP + GDP + phosphate + 2 H(+). Its pathway is purine metabolism; AMP biosynthesis via de novo pathway; AMP from IMP: step 1/2. Its function is as follows. Plays an important role in the de novo pathway of purine nucleotide biosynthesis. Catalyzes the first committed step in the biosynthesis of AMP from IMP. The sequence is that of Adenylosuccinate synthetase from Mesoplasma florum (strain ATCC 33453 / NBRC 100688 / NCTC 11704 / L1) (Acholeplasma florum).